Reading from the N-terminus, the 129-residue chain is Small ribosomal subunit protein uS11 (129 aa).

Belongs to the universal ribosomal protein uS11 family. In terms of assembly, part of the 30S ribosomal subunit. Interacts with proteins S7 and S18. Binds to IF-3.

Located on the platform of the 30S subunit, it bridges several disparate RNA helices of the 16S rRNA. Forms part of the Shine-Dalgarno cleft in the 70S ribosome. This chain is Small ribosomal subunit protein uS11, found in Pectobacterium atrosepticum (strain SCRI 1043 / ATCC BAA-672) (Erwinia carotovora subsp. atroseptica).